The following is a 177-amino-acid chain: Trafficking regulator of GLUT4 1 (177 aa).

Residues 1-105 (MAHPVQSEFP…QDQEAPRDYL (105 aa)) are Cytoplasmic-facing. 3 positions are modified to phosphoserine: S48, S87, and S88. The segment at 71-92 (EAPLPRSPSRASSRRASSIATT) is disordered. The segment covering 72–88 (APLPRSPSRASSRRASS) has biased composition (low complexity). The segment at residues 106–126 (ILAVVACFCPVWPLNLIPLII) is an intramembrane region (helical). Topologically, residues 127 to 153 (SIMSRSSMQQGNVDGARRLGRLARLLS) are cytoplasmic. A helical transmembrane segment spans residues 154 to 174 (ITLIIMGIVIIMVAVTVNFTV). Over 175 to 177 (QKK) the chain is Extracellular.

Belongs to the CD225/Dispanin family. In terms of assembly, interacts with SLC2A4; the interaction is required for proper SLC2A4 reacycling after insulin stimulation. As to expression, expressed at high levels in heart, mammary gland, adrenal gland, stomach, smooth muscle and skeletal muscle, and at lower levels in brain and lung. Strongly down-regulated in lung cancer tissues, due to hypermethylation of the corresponding locus. Expressed in adipose tissue.

The protein localises to the cell membrane. It localises to the endomembrane system. The protein resides in the cytoplasm. Its subcellular location is the perinuclear region. Its function is as follows. Regulates insulin-mediated adipose tissue glucose uptake and transport by modulation of SLC2A4 recycling. Not required for SLC2A4 membrane fusion upon an initial stimulus, but rather is necessary for proper protein recycling during prolonged insulin stimulation. This is Trafficking regulator of GLUT4 1 from Homo sapiens (Human).